We begin with the raw amino-acid sequence, 819 residues long: Myosin light chain kinase 3 (819 aa).

Disordered stretches follow at residues 146-256 (VPWR…TPSE), 273-334 (VVSP…TPPR), and 347-462 (EMLM…EQDC). At Ser-152 the chain carries Phosphoserine. Basic and acidic residues-rich tracts occupy residues 158–170 (EENK…EGGK) and 183–196 (DARE…KADV). Pro residues predominate over residues 307–318 (GPGPQCPGPPGL). Residues Ser-355, Ser-401, and Ser-408 each carry the phosphoserine modification. In terms of domain architecture, Protein kinase spans 515-770 (VCQHEVLGGG…ATQCLKHEWL (256 aa)). Residues 521 to 529 (LGGGRFGQV) and Lys-544 contribute to the ATP site. Asp-636 serves as the catalytic Proton acceptor.

It belongs to the protein kinase superfamily. CAMK Ser/Thr protein kinase family. The cofactor is Mg(2+). Phosphorylated on serine residues. In terms of tissue distribution, restricted to heart.

It localises to the cytoplasm. It catalyses the reaction L-seryl-[myosin light chain] + ATP = O-phospho-L-seryl-[myosin light chain] + ADP + H(+). The enzyme catalyses L-threonyl-[myosin light chain] + ATP = O-phospho-L-threonyl-[myosin light chain] + ADP + H(+). In terms of biological role, kinase that phosphorylates MYL2 in vitro. Promotes sarcomere formation in cardiomyocytes and increases cardiomyocyte contractility. In Homo sapiens (Human), this protein is Myosin light chain kinase 3 (MYLK3).